A 691-amino-acid polypeptide reads, in one-letter code: tRNA-dihydrouridine(47) synthase [NAD(P)(+)]-like (691 aa).

An N-acetylserine modification is found at Ser2. Residues 55 to 94 (PPPPSRSVKQNDAADVRAPQSGLVQEKKSKRQLKRERREQ) form a disordered region. C3H1-type zinc fingers lie at residues 94 to 125 (QSTINLCPQVARTEDVDSCQYKDKCRFNHDIE) and 138 to 163 (QCPFVASGMKCAYGLSCRFLGSHRDI). The interval 259-286 (LETEEVRPMKKAKSEDQKNSKTGDVGGV) is disordered. Over residues 262–279 (EEVRPMKKAKSEDQKNSK) the composition is skewed to basic and acidic residues. FMN contacts are provided by residues 344–346 (PLT) and Gln398. The active-site Proton donor is Cys429. FMN-binding positions include Lys468, His498, 531–533 (NGD), and 556–557 (AR).

This sequence belongs to the Dus family. Dus3 subfamily. FMN serves as cofactor.

It carries out the reaction 5,6-dihydrouridine(47) in tRNA + NAD(+) = uridine(47) in tRNA + NADH + H(+). The catalysed reaction is 5,6-dihydrouridine(47) in tRNA + NADP(+) = uridine(47) in tRNA + NADPH + H(+). The enzyme catalyses a 5,6-dihydrouridine in mRNA + NAD(+) = a uridine in mRNA + NADH + H(+). It catalyses the reaction a 5,6-dihydrouridine in mRNA + NADP(+) = a uridine in mRNA + NADPH + H(+). Catalyzes the synthesis of dihydrouridine, a modified base found in the D-loop of most tRNAs. Specifically modifies U47 in cytoplasmic tRNAs. Catalyzes the synthesis of dihydrouridine in some mRNAs, thereby affecting their translation. This chain is tRNA-dihydrouridine(47) synthase [NAD(P)(+)]-like, found in Arabidopsis thaliana (Mouse-ear cress).